The sequence spans 143 residues: Ribosome maturation factor RimP (143 aa).

It belongs to the RimP family.

Its subcellular location is the cytoplasm. Its function is as follows. Required for maturation of 30S ribosomal subunits. This Nitrosomonas eutropha (strain DSM 101675 / C91 / Nm57) protein is Ribosome maturation factor RimP.